Reading from the N-terminus, the 251-residue chain is 3-deoxy-manno-octulosonate cytidylyltransferase (251 aa).

Belongs to the KdsB family.

It is found in the cytoplasm. It catalyses the reaction 3-deoxy-alpha-D-manno-oct-2-ulosonate + CTP = CMP-3-deoxy-beta-D-manno-octulosonate + diphosphate. Its pathway is nucleotide-sugar biosynthesis; CMP-3-deoxy-D-manno-octulosonate biosynthesis; CMP-3-deoxy-D-manno-octulosonate from 3-deoxy-D-manno-octulosonate and CTP: step 1/1. It functions in the pathway bacterial outer membrane biogenesis; lipopolysaccharide biosynthesis. Activates KDO (a required 8-carbon sugar) for incorporation into bacterial lipopolysaccharide in Gram-negative bacteria. This Agrobacterium fabrum (strain C58 / ATCC 33970) (Agrobacterium tumefaciens (strain C58)) protein is 3-deoxy-manno-octulosonate cytidylyltransferase.